The following is a 147-amino-acid chain: Small ribosomal subunit protein uS12 (147 aa).

This sequence belongs to the universal ribosomal protein uS12 family. In terms of assembly, part of the 30S ribosomal subunit.

With S4 and S5 plays an important role in translational accuracy. Located at the interface of the 30S and 50S subunits. The chain is Small ribosomal subunit protein uS12 from Pyrococcus horikoshii (strain ATCC 700860 / DSM 12428 / JCM 9974 / NBRC 100139 / OT-3).